The sequence spans 150 residues: uncharacterized protein (150 aa).

One can recognise an HTH asnC-type domain in the interval 5–66; it reads LDRTDKMLLE…KPNYKKLNLG (62 aa). Positions 24–43 form a DNA-binding region, H-T-H motif; that stretch reads IAALSKKLGIPRTTVHYRIK.

This is an uncharacterized protein from Pyrococcus furiosus (strain ATCC 43587 / DSM 3638 / JCM 8422 / Vc1).